A 388-amino-acid polypeptide reads, in one-letter code: Na(+)/H(+) antiporter NhaA (388 aa).

11 consecutive transmembrane segments (helical) span residues 14–34 (GGII…SGFT), 59–79 (MLLW…GLEV), 95–115 (AFPV…YLAF), 125–145 (GWAI…ALLG), 154–174 (IFLM…IALF), 179–199 (LSMV…VLNL), 219–239 (VLKS…FIPL), 254–274 (VLHP…NAGV), 287–307 (ILPL…ISLF), 328–348 (IMAV…IASL), and 356–376 (ALIN…AVIG).

This sequence belongs to the NhaA Na(+)/H(+) (TC 2.A.33) antiporter family.

The protein localises to the cell inner membrane. The enzyme catalyses Na(+)(in) + 2 H(+)(out) = Na(+)(out) + 2 H(+)(in). Functionally, na(+)/H(+) antiporter that extrudes sodium in exchange for external protons. The polypeptide is Na(+)/H(+) antiporter NhaA (Citrobacter koseri (strain ATCC BAA-895 / CDC 4225-83 / SGSC4696)).